The following is a 546-amino-acid chain: Mercuric reductase (546 aa).

The HMA domain maps to 2–66 (NKFKVNISGM…AIDEANYQAG (65 aa)). A metal cation is bound by residues C13 and C16. Residues A96, G116, and T121 each contribute to the FAD site. A disulfide bridge connects residues C122 and C127. FAD is bound by residues K131 and A195. NAD(+)-binding positions include 256–263 (GSGYIGME) and G346. D387 and V395 together coordinate FAD. 2 residues coordinate Hg(2+): C543 and C544.

The protein belongs to the class-I pyridine nucleotide-disulfide oxidoreductase family. In terms of assembly, homodimer. FAD is required as a cofactor.

It carries out the reaction Hg + NADP(+) + H(+) = Hg(2+) + NADPH. Uses NADPH as the preferred electron donor, but shows slight activity with NADH as well. Inhibited by Cu(2+), Cd(2+), Zn(2+) and Co(2+), with Cu(2+) showing the strongest inhibition. Enzyme activity is enhanced by b-mercaptoethanol and NaCl up to concentrations of 500 uM and 100 mM respectively, followed by inhibition at higher concentrations. Its function is as follows. Resistance to Hg(2+) in bacteria appears to be governed by a specialized system which includes mercuric reductase. MerA protein is responsible for volatilizing mercury as Hg(0). Catalyzes reduction of Hg(2+) to elemental Hg, which is volatile and can diffuse out of cells passively. Plays a pivotal role in mercury resistance and cell protection. The chain is Mercuric reductase from Lysinibacillus sphaericus (Bacillus sphaericus).